A 636-amino-acid chain; its full sequence is Amylosucrase (636 aa).

Substrate is bound by residues aspartate 152, histidine 195, glutamine 262, and arginine 292. Aspartate 294 serves as the catalytic Nucleophile. Glutamate 336 (proton donor) is an active-site residue. Residues histidine 400, aspartate 401, and arginine 517 each coordinate substrate.

The protein belongs to the glycosyl hydrolase 13 family. Monomer.

It localises to the secreted. The catalysed reaction is [(1-&gt;4)-alpha-D-glucosyl](n) + sucrose = [(1-&gt;4)-alpha-D-glucosyl](n+1) + D-fructose. Amylosucrase favors hydrolysis at low sucrose concentrations, and polymerization at high sucrose concentrations. Competitively inhibited by fructose. Its function is as follows. Catalyzes the synthesis of alpha-glucan from sucrose. Catalyzes, in addition, sucrose hydrolysis, maltose and maltotriose synthesis by successive transfers of the glucosyl moiety of sucrose onto the released glucose, and finally turanose and trehalulose synthesis, these two sucrose isomers being obtained by glucosyl transfer onto fructose. This Neisseria polysaccharea protein is Amylosucrase (ams).